We begin with the raw amino-acid sequence, 158 residues long: NAD(P)H-quinone oxidoreductase subunit J, chloroplastic (158 aa).

This sequence belongs to the complex I 30 kDa subunit family. NDH is composed of at least 16 different subunits, 5 of which are encoded in the nucleus.

It is found in the plastid. Its subcellular location is the chloroplast thylakoid membrane. It carries out the reaction a plastoquinone + NADH + (n+1) H(+)(in) = a plastoquinol + NAD(+) + n H(+)(out). It catalyses the reaction a plastoquinone + NADPH + (n+1) H(+)(in) = a plastoquinol + NADP(+) + n H(+)(out). In terms of biological role, NDH shuttles electrons from NAD(P)H:plastoquinone, via FMN and iron-sulfur (Fe-S) centers, to quinones in the photosynthetic chain and possibly in a chloroplast respiratory chain. The immediate electron acceptor for the enzyme in this species is believed to be plastoquinone. Couples the redox reaction to proton translocation, and thus conserves the redox energy in a proton gradient. The chain is NAD(P)H-quinone oxidoreductase subunit J, chloroplastic from Piper cenocladum (Ant piper).